The chain runs to 149 residues: Large ribosomal subunit protein uL24 (149 aa).

The disordered stretch occupies residues 114-149 (RKIIERSGGTPEVEAVPEKSEEEKEEKEKEEEKSEE). The segment covering 129–149 (VPEKSEEEKEEKEKEEEKSEE) has biased composition (basic and acidic residues).

It belongs to the universal ribosomal protein uL24 family. Part of the 50S ribosomal subunit.

Its function is as follows. One of two assembly initiator proteins, it binds directly to the 5'-end of the 23S rRNA, where it nucleates assembly of the 50S subunit. Functionally, located at the polypeptide exit tunnel on the outside of the subunit. The protein is Large ribosomal subunit protein uL24 of Methanopyrus kandleri (strain AV19 / DSM 6324 / JCM 9639 / NBRC 100938).